The primary structure comprises 153 residues: D-aminoacyl-tRNA deacylase (153 aa).

Positions 142–143 (GP) match the Gly-cisPro motif, important for rejection of L-amino acids motif.

It belongs to the DTD family. As to quaternary structure, homodimer.

The protein localises to the cytoplasm. It catalyses the reaction glycyl-tRNA(Ala) + H2O = tRNA(Ala) + glycine + H(+). It carries out the reaction a D-aminoacyl-tRNA + H2O = a tRNA + a D-alpha-amino acid + H(+). An aminoacyl-tRNA editing enzyme that deacylates mischarged D-aminoacyl-tRNAs. Also deacylates mischarged glycyl-tRNA(Ala), protecting cells against glycine mischarging by AlaRS. Acts via tRNA-based rather than protein-based catalysis; rejects L-amino acids rather than detecting D-amino acids in the active site. By recycling D-aminoacyl-tRNA to D-amino acids and free tRNA molecules, this enzyme counteracts the toxicity associated with the formation of D-aminoacyl-tRNA entities in vivo and helps enforce protein L-homochirality. The sequence is that of D-aminoacyl-tRNA deacylase from Cupriavidus necator (strain ATCC 17699 / DSM 428 / KCTC 22496 / NCIMB 10442 / H16 / Stanier 337) (Ralstonia eutropha).